Here is a 336-residue protein sequence, read N- to C-terminus: Fructose-1,6-bisphosphatase class 1 (336 aa).

Residues Glu-90, Asp-112, Leu-114, and Asp-115 each contribute to the Mg(2+) site. Residues 115-118, Asn-211, and Lys-277 contribute to the substrate site; that span reads DGSS. Residue Glu-283 coordinates Mg(2+).

It belongs to the FBPase class 1 family. Homotetramer. Mg(2+) is required as a cofactor.

The protein resides in the cytoplasm. The enzyme catalyses beta-D-fructose 1,6-bisphosphate + H2O = beta-D-fructose 6-phosphate + phosphate. It participates in carbohydrate biosynthesis; gluconeogenesis. The chain is Fructose-1,6-bisphosphatase class 1 from Pseudomonas paraeruginosa (strain DSM 24068 / PA7) (Pseudomonas aeruginosa (strain PA7)).